The primary structure comprises 77 residues: ATP synthase subunit c (77 aa).

The next 2 helical transmembrane spans lie at 13-33 (IATVGYGLAAIGPGIGVGIVA) and 55-75 (FLGIAFSEALALIGLATYFIF).

It belongs to the ATPase C chain family. F-type ATPases have 2 components, F(1) - the catalytic core - and F(0) - the membrane proton channel. F(1) has five subunits: alpha(3), beta(3), gamma(1), delta(1), epsilon(1). F(0) has three main subunits: a(1), b(2) and c(10-14). The alpha and beta chains form an alternating ring which encloses part of the gamma chain. F(1) is attached to F(0) by a central stalk formed by the gamma and epsilon chains, while a peripheral stalk is formed by the delta and b chains.

The protein localises to the cell membrane. Functionally, f(1)F(0) ATP synthase produces ATP from ADP in the presence of a proton or sodium gradient. F-type ATPases consist of two structural domains, F(1) containing the extramembraneous catalytic core and F(0) containing the membrane proton channel, linked together by a central stalk and a peripheral stalk. During catalysis, ATP synthesis in the catalytic domain of F(1) is coupled via a rotary mechanism of the central stalk subunits to proton translocation. In terms of biological role, key component of the F(0) channel; it plays a direct role in translocation across the membrane. A homomeric c-ring of between 10-14 subunits forms the central stalk rotor element with the F(1) delta and epsilon subunits. In Clavibacter sepedonicus (Clavibacter michiganensis subsp. sepedonicus), this protein is ATP synthase subunit c.